Reading from the N-terminus, the 316-residue chain is Acetyl-coenzyme A carboxylase carboxyl transferase subunit alpha (316 aa).

The region spanning Lys-40–Glu-290 is the CoA carboxyltransferase C-terminal domain.

This sequence belongs to the AccA family. In terms of assembly, acetyl-CoA carboxylase is a heterohexamer composed of biotin carboxyl carrier protein (AccB), biotin carboxylase (AccC) and two subunits each of ACCase subunit alpha (AccA) and ACCase subunit beta (AccD).

It is found in the cytoplasm. It catalyses the reaction N(6)-carboxybiotinyl-L-lysyl-[protein] + acetyl-CoA = N(6)-biotinyl-L-lysyl-[protein] + malonyl-CoA. Its pathway is lipid metabolism; malonyl-CoA biosynthesis; malonyl-CoA from acetyl-CoA: step 1/1. Its function is as follows. Component of the acetyl coenzyme A carboxylase (ACC) complex. First, biotin carboxylase catalyzes the carboxylation of biotin on its carrier protein (BCCP) and then the CO(2) group is transferred by the carboxyltransferase to acetyl-CoA to form malonyl-CoA. This is Acetyl-coenzyme A carboxylase carboxyl transferase subunit alpha from Acidithiobacillus ferrooxidans (strain ATCC 23270 / DSM 14882 / CIP 104768 / NCIMB 8455) (Ferrobacillus ferrooxidans (strain ATCC 23270)).